The primary structure comprises 552 residues: Putative phosphate permease MT2339 (552 aa).

Helical transmembrane passes span 38–58 (WHLSFSLLLAGSFVLFSWWAF), 69–89 (ILVLATVVGMFMAFNVGGNDV), 107–127 (ALLVAAIFEVSGAVIAGGDVT), 146–166 (DFMNIMLSALSAAALWLLFAN), 178–198 (IIGGIVGAAIALGMVSGQGGA), 213–233 (VSWVLSPVLGGLVSYLLYGVI), 326–346 (VPLVAAAGSMIIVAMLLFKGF), 360–380 (FIIAMVGAAVWMATFIFAKTL), 389–409 (TFLMFSWMQVFTASGFAFSHG), 437–457 (AVPAAAMVTFGVALCAGLWFI), 472–492 (MHPASGFAAELSAAGVVMGAT), 493–513 (VLGLPVSSTHILIGAVLGVGI), and 526–546 (IVLAWVITLPSAAILASVGLV).

Belongs to the inorganic phosphate transporter (PiT) (TC 2.A.20) family.

The protein localises to the cell membrane. In terms of biological role, potential transporter for phosphate. This Mycobacterium tuberculosis (strain CDC 1551 / Oshkosh) protein is Putative phosphate permease MT2339.